A 1203-amino-acid chain; its full sequence is Regulator of telomere elongation helicase 1 (1203 aa).

Residues 7–296 (NGVTVDFPFQ…ARVTQQGELQ (290 aa)) form the Helicase ATP-binding domain. Residue 42–49 (SPTGTGKT) participates in ATP binding. Positions 145, 163, 172, and 207 each coordinate [4Fe-4S] cluster. Residues 151–167 (KKQESNHMQISLCRKKV) carry the Nuclear localization signal motif. The DEAH box motif lies at 250 to 253 (DEAH). The Nuclear localization signal motif lies at 871-877 (QKGGRKK). 2 disordered regions span residues 998-1020 (QLDP…TSKG) and 1120-1203 (TTGK…RSKQ). The segment covering 1123-1134 (KDLELEGPRDES) has biased composition (basic and acidic residues). The PIP-box motif lies at 1160–1167 (QSKISSFF). Basic and acidic residues predominate over residues 1169-1181 (QRPDESVRSDDTT).

Belongs to the helicase family. RAD3/XPD subfamily. As to quaternary structure, interacts with TERF1. Interacts (via PIP-box) with PCNA; the interaction is direct and essential for suppressing telomere fragility. Interacts with MMS19; the interaction mediates the association of RTEL1 with the cytosolic iron-sulfur protein assembly (CIA) complex.

It localises to the nucleus. It catalyses the reaction ATP + H2O = ADP + phosphate + H(+). Its function is as follows. A probable ATP-dependent DNA helicase implicated in telomere-length regulation, DNA repair and the maintenance of genomic stability. Acts as an anti-recombinase to counteract toxic recombination and limit crossover during meiosis. Regulates meiotic recombination and crossover homeostasis by physically dissociating strand invasion events and thereby promotes noncrossover repair by meiotic synthesis dependent strand annealing (SDSA) as well as disassembly of D loop recombination intermediates. Also disassembles T loops and prevents telomere fragility by counteracting telomeric G4-DNA structures, which together ensure the dynamics and stability of the telomere. The chain is Regulator of telomere elongation helicase 1 (Rtel1) from Mus spretus (Western Mediterranean mouse).